Here is a 121-residue protein sequence, read N- to C-terminus: uncharacterized protein (121 aa).

Residues 8-37 are a coiled coil; it reads KQLMVCRDEIKKLKLKEKEAKNRILTYLKN.

This is an uncharacterized protein from Aedes vexans (Inland floodwater mosquito).